The primary structure comprises 209 residues: Uracil phosphoribosyltransferase (209 aa).

5-phospho-alpha-D-ribose 1-diphosphate is bound by residues Arg79, Arg104, and 131–139; that span reads DPMLATGNS. Uracil-binding positions include Ile194 and 199-201; that span reads GDA. Asp200 is a binding site for 5-phospho-alpha-D-ribose 1-diphosphate.

This sequence belongs to the UPRTase family. Requires Mg(2+) as cofactor.

It carries out the reaction UMP + diphosphate = 5-phospho-alpha-D-ribose 1-diphosphate + uracil. The protein operates within pyrimidine metabolism; UMP biosynthesis via salvage pathway; UMP from uracil: step 1/1. Allosterically activated by GTP. Functionally, catalyzes the conversion of uracil and 5-phospho-alpha-D-ribose 1-diphosphate (PRPP) to UMP and diphosphate. The chain is Uracil phosphoribosyltransferase from Rhodococcus jostii (strain RHA1).